The primary structure comprises 873 residues: Protein SEY1 (873 aa).

Positions 1–20 (MVANGHFAGSADGQHSSSYE) are disordered. At 1–749 (MVANGHFAGS…KRSAIGGITQ (749 aa)) the chain is on the cytoplasmic side. Residues 49-307 (GFNYHLISVF…IPADGFAVYA (259 aa)) enclose the GB1/RHD3-type G domain. 59-66 (GSQSTGKS) contributes to the GTP binding site. A coiled-coil region spans residues 482-506 (SNYQQELSLYQKDLERTSGQLRRDE). Positions 677–703 (DKWIGHTPSSATPADEEDLTPIGGVDD) are disordered. Positions 690–703 (ADEEDLTPIGGVDD) are enriched in acidic residues. A helical membrane pass occupies residues 750–770 (VPLYFYGLLFALGWNEILAVL). Over 771 to 773 (RNP) the chain is Lumenal. The helical transmembrane segment at 774–794 (VYFLLLFVCAIGAYITYQLNL) threads the bilayer. Over 795–873 (WGPIIKMTEA…EDVDDDDDDF (79 aa)) the chain is Cytoplasmic. Residues 828–873 (RQAMAMSGARNATEEHEMSRLSRKPAERGGRKNRADEDVDDDDDDF) are disordered. A compositionally biased stretch (basic and acidic residues) spans 839–863 (ATEEHEMSRLSRKPAERGGRKNRAD). Residues 864–873 (EDVDDDDDDF) are compositionally biased toward acidic residues.

The protein belongs to the TRAFAC class dynamin-like GTPase superfamily. GB1/RHD3 GTPase family. RHD3 subfamily.

It is found in the endoplasmic reticulum membrane. Functionally, cooperates with the reticulon proteins and tubule-shaping DP1 family proteins to generate and maintain the structure of the tubular endoplasmic reticulum network. Has GTPase activity, which is required for its function in ER organization. This is Protein SEY1 from Ajellomyces capsulatus (strain NAm1 / WU24) (Darling's disease fungus).